Reading from the N-terminus, the 983-residue chain is Protein translocase subunit SecA (983 aa).

ATP is bound by residues Gln-83, 101–105, and Asp-489; that span reads GEGKT. The segment at 948–983 is disordered; the sequence is ISSEEEDNNEKTNINNNEDLERTKGEAQQTAKNPNE. The span at 973-983 shows a compositional bias: polar residues; it reads EAQQTAKNPNE.

It belongs to the SecA family. Monomer and homodimer. Part of the essential Sec protein translocation apparatus which comprises SecA, SecYEG and auxiliary proteins SecDF. Other proteins may also be involved.

The protein resides in the cell membrane. It is found in the cytoplasm. It catalyses the reaction ATP + H2O + cellular proteinSide 1 = ADP + phosphate + cellular proteinSide 2.. Its function is as follows. Part of the Sec protein translocase complex. Interacts with the SecYEG preprotein conducting channel. Has a central role in coupling the hydrolysis of ATP to the transfer of proteins into and across the cell membrane, serving as an ATP-driven molecular motor driving the stepwise translocation of polypeptide chains across the membrane. This chain is Protein translocase subunit SecA, found in Mesomycoplasma hyopneumoniae (strain 232) (Mycoplasma hyopneumoniae).